A 1001-amino-acid chain; its full sequence is Sarcoplasmic/endoplasmic reticulum calcium ATPase 1 (1001 aa).

Transmembrane regions (helical) follow at residues 49–69 (LWEL…LLAA), 90–110 (EPFV…WQER), 254–273 (DEFG…AVWL), and 296–313 (FKIA…GLPA). Residues valine 304, alanine 305, isoleucine 307, and glutamate 309 each contribute to the Ca(2+) site. Aspartate 351 functions as the 4-aspartylphosphate intermediate in the catalytic mechanism. 2 residues coordinate Mg(2+): aspartate 351 and threonine 353. Threonine 353 provides a ligand contact to ATP. Threonine 441 carries the phosphothreonine modification. Positions 442, 489, 515, and 560 each coordinate ATP. Threonine 569 carries the post-translational modification Phosphothreonine. Serine 581 is subject to Phosphoserine. The ATP site is built by threonine 625, glycine 626, aspartate 627, arginine 678, and lysine 684. Aspartate 703 is a Mg(2+) binding site. Residue asparagine 706 participates in ATP binding. The next 3 membrane-spanning stretches (helical) occupy residues 758 to 777 (KQFI…CIFL), 788 to 808 (IPVQ…TALG), and 829 to 851 (ISGW…TVGA). Asparagine 768, glutamate 771, asparagine 796, threonine 799, and aspartate 800 together coordinate Ca(2+). The tract at residues 788 to 808 (IPVQLLWVNLVTDGLPATALG) is interaction with PLN. The cysteines at positions 876 and 888 are disulfide-linked. The next 3 helical transmembrane spans lie at 898–917 (TMAL…NSLS), 931–949 (IWLL…LILY), and 965–985 (TQWL…EILK). Position 908 (glutamate 908) interacts with Ca(2+). The interval 932 to 943 (WLLGSICLSMSL) is interaction with PLN.

The protein belongs to the cation transport ATPase (P-type) (TC 3.A.3) family. Type IIA subfamily. In terms of assembly, interacts with sarcolipin (SLN). Interacts with phospholamban (PLN). Interacts with myoregulin (MRLN). Interacts with DWORF. Interacts with VMP1. Mg(2+) serves as cofactor. In terms of tissue distribution, skeletal muscle, fast twitch muscle (type II) fibers.

The protein resides in the endoplasmic reticulum membrane. The protein localises to the sarcoplasmic reticulum membrane. The enzyme catalyses Ca(2+)(in) + ATP + H2O = Ca(2+)(out) + ADP + phosphate + H(+). Inhibited by sarcolipin (SLN) and myoregulin (MRLN). Has also been shown to be reversibly inhibited by phospholamban (PLN) at low calcium concentrations in vitro. Dephosphorylated PLN decreases the apparent affinity of the ATPase for calcium and this inhibition is regulated by the phosphorylation of PLN in vitro. Enhanced by DWORF; DWORF increases activity by displacing sarcolipin (SLN), phospholamban (PLN) and myoregulin (MRLN). Functionally, key regulator of striated muscle performance by acting as the major Ca(2+) ATPase responsible for the reuptake of cytosolic Ca(2+) into the sarcoplasmic reticulum. Catalyzes the hydrolysis of ATP coupled with the translocation of calcium from the cytosol to the sarcoplasmic reticulum lumen. Contributes to calcium sequestration involved in muscular excitation/contraction. This chain is Sarcoplasmic/endoplasmic reticulum calcium ATPase 1, found in Homo sapiens (Human).